Consider the following 352-residue polypeptide: MASWPPLELQSSNQSQLFPQNATACDNAPEAWDLLHRVLPTFIISICSFGLLGNLFVLLVFLLPRRRLNVAEIYLANLAASDLVFVLGLPFWAENIWNQFNWPFGALLCRGINGVIKANLFISIFLVVAISQDRYCLLVHPMASRRRQRRRQARVTCVLIWVVGGLLSIPTFLLRSIQAVPDLNITACILLLPHEAWHFARIVELNILAFLLPLAAIVFFNYHILASLRGREEVSRTRCGGRKDSKTTALILTLVVAFLVCWAPYHFFAFLEFLFQVQAIRSCFWEDFIDLGLQLANFLAFTNSSLNPVIYVFVGRLFRTKVWELYKQCTPKSLAPISSSHRKEIFQLFWRN.

At 1–41 (MASWPPLELQSSNQSQLFPQNATACDNAPEAWDLLHRVLPT) the chain is on the extracellular side. Asn-13 and Asn-21 each carry an N-linked (GlcNAc...) asparagine glycan. The helical transmembrane segment at 42–62 (FIISICSFGLLGNLFVLLVFL) threads the bilayer. The Cytoplasmic segment spans residues 63-72 (LPRRRLNVAE). The helical transmembrane segment at 73–93 (IYLANLAASDLVFVLGLPFWA) threads the bilayer. Topologically, residues 94–110 (ENIWNQFNWPFGALLCR) are extracellular. An intrachain disulfide couples Cys-109 to Cys-188. Residues 111 to 131 (GINGVIKANLFISIFLVVAIS) form a helical membrane-spanning segment. At 132–153 (QDRYCLLVHPMASRRRQRRRQA) the chain is on the cytoplasmic side. A helical membrane pass occupies residues 154–174 (RVTCVLIWVVGGLLSIPTFLL). At 175 to 206 (RSIQAVPDLNITACILLLPHEAWHFARIVELN) the chain is on the extracellular side. N-linked (GlcNAc...) asparagine glycosylation is present at Asn-184. Residues 207-227 (ILAFLLPLAAIVFFNYHILAS) traverse the membrane as a helical segment. Topologically, residues 228–250 (LRGREEVSRTRCGGRKDSKTTAL) are cytoplasmic. The chain crosses the membrane as a helical span at residues 251–271 (ILTLVVAFLVCWAPYHFFAFL). Topologically, residues 272 to 294 (EFLFQVQAIRSCFWEDFIDLGLQ) are extracellular. The chain crosses the membrane as a helical span at residues 295–315 (LANFLAFTNSSLNPVIYVFVG). The Cytoplasmic portion of the chain corresponds to 316 to 352 (RLFRTKVWELYKQCTPKSLAPISSSHRKEIFQLFWRN). A lipid anchor (S-palmitoyl cysteine) is attached at Cys-329.

Belongs to the G-protein coupled receptor 1 family. Bradykinin receptor subfamily. BDKRB1 sub-subfamily.

The protein resides in the cell membrane. Functionally, this is a receptor for bradykinin. Could be a factor in chronic pain and inflammation. The sequence is that of B1 bradykinin receptor (BDKRB1) from Chlorocebus pygerythrus (Vervet monkey).